The sequence spans 3511 residues: Unconventional myosin-XV (3511 aa).

Disordered regions lie at residues 1–44 (MADE…TPKI), 574–690 (KKPI…SLRQ), 712–1030 (FAEP…PNKN), and 1105–1135 (VSSFRPKGPAPVQPPEHPDQDPEQGPAPQAC). The span at 622–634 (SQPQARNNNNSHG) shows a compositional bias: polar residues. The span at 654 to 672 (PPMPAPSPSPASPLTPPFS) shows a compositional bias: pro residues. A compositionally biased stretch (low complexity) spans 769-792 (PSLRSLPGQGYHSPLGPLSPQLSL). Pro residues predominate over residues 797–807 (FQPPFPPPPRR). One can recognise a Myosin motor domain in the interval 1206–1883 (DGVEDMTQLE…LHQLLESMRE (678 aa)). Residue 1299–1306 (GESGSGKT) coordinates ATP. Positions 1307 to 1334 (EATKLILRCLAAMNQRRDVMQQIKILEA) form a coiled coil. The interval 1776 to 1783 (FVRCLKPN) is actin-binding. The tract at residues 1872-2013 (EHLHQLLESM…SSGPRVAVVR (142 aa)) is neck or regulatory domain. IQ domains are found at residues 1886 to 1908 (QNRAALTLQRYLRGFFIQRHFRS) and 1909 to 1938 (LRRKIILLQSRARGFLARQRYQQMRQSLLK). The interval 2014–3511 (APRLQAEPCV…TLPPSEITLL (1498 aa)) is tail. One can recognise a MyTH4 1 domain in the interval 2049 to 2195 (MLTVPLKMPL…PTQLEWTAIQ (147 aa)). Disordered regions lie at residues 2330–2359 (SHKEDGTNGETEAQRWTSNRQAVDSIGEST), 2392–2425 (YRMKGGGQPGGGGGSTSEDTSRRPPEPKLKPIPG), 2460–2509 (PLSA…SVAK), 2565–2584 (KQPPWAGHPEARRTDGGKVF), and 2629–2648 (RPCMGPTPVQPSRSLEPPED). Polar residues predominate over residues 2337–2351 (NGETEAQRWTSNRQA). Residues 2395–2406 (KGGGQPGGGGGS) show a composition bias toward gly residues. Residues 2410 to 2420 (DTSRRPPEPKL) are compositionally biased toward basic and acidic residues. Positions 2573–2584 (PEARRTDGGKVF) are enriched in basic and acidic residues. The SH3 domain occupies 2848–2934 (KDSDYVVAVR…PSELVQPAAA (87 aa)). The interval 2964–2984 (EVGRRREGPPVRARSADSGED) is disordered. A compositionally biased stretch (basic and acidic residues) spans 2965–2980 (VGRRREGPPVRARSAD). Positions 3031–3185 (FTKVPIQESL…PSNMELRAML (155 aa)) constitute a MyTH4 2 domain. The FERM domain occupies 3190–3511 (SKRQLFLLPG…TLPPSEITLL (322 aa)).

It belongs to the TRAFAC class myosin-kinesin ATPase superfamily. Myosin family. Interacts with the third PDZ domain of WHRN which is necessary for localization of WHRN to stereocilium tips. Interacts with FASLG. Interacts with EPS8. As to expression, in the developing inner ear, expressed in cochlea and vestibular apparatus. Expression appears to be restricted to cochlear neurosensory cells and upper epithelial layer of macula saccula. Also expressed in macula utriculi and cristae ampullaris of the semicircular canals. In adult cochlear hair cells, highest expression in stereocilia and apical body.

Its subcellular location is the cell projection. The protein localises to the stereocilium. It localises to the cytoplasm. It is found in the cytoskeleton. Its function is as follows. Myosins are actin-based motor molecules with ATPase activity. Unconventional myosins serve in intracellular movements. Their highly divergent tails are presumed to bind to membranous compartments, which would be moved relative to actin filaments. Required for the arrangement of stereocilia in mature hair bundles. The chain is Unconventional myosin-XV (Myo15a) from Mus musculus (Mouse).